A 594-amino-acid polypeptide reads, in one-letter code: UvrABC system protein C (594 aa).

In terms of domain architecture, GIY-YIG spans 14-91 (DSPGCYLHKD…IQENMPKYNI (78 aa)). Positions 196–231 (DKIIDDLRSKMLEASNKQEFERAAEYRDLISGIATM) constitute a UVR domain.

Belongs to the UvrC family. Interacts with UvrB in an incision complex.

The protein resides in the cytoplasm. The UvrABC repair system catalyzes the recognition and processing of DNA lesions. UvrC both incises the 5' and 3' sides of the lesion. The N-terminal half is responsible for the 3' incision and the C-terminal half is responsible for the 5' incision. The protein is UvrABC system protein C of Streptococcus equi subsp. zooepidemicus (strain MGCS10565).